We begin with the raw amino-acid sequence, 356 residues long: Zinc finger protein 830 (356 aa).

Positions 11-33 (AQEELRKLMKAKQRESSSKKRIE) form a coiled coil. The segment at 47–69 (CVVCNSLIKSELLWPAHILGKQH) adopts a C2H2-type zinc-finger fold. The interval 71 to 195 (EKVAELKGTK…PTSSADNLPA (125 aa)) is disordered. Residues 80–90 (KATTSSPSNTI) show a composition bias toward polar residues. 2 stretches are compositionally biased toward basic and acidic residues: residues 99-118 (KGSEPEKQESKRTKGSEDHP) and 125-135 (LPEEFFEKEKT). The span at 150–165 (DYEDVDDDDAEEGEEY) shows a compositional bias: acidic residues. Positions 278–322 (AEEDEEGRLDRQIDEIDEQIQCYRRVEHLRDRKDTLQDAKMEVLK) form a coiled coil.

The protein resides in the nucleus. It localises to the chromosome. It is found in the nucleus speckle. Functionally, may act as an important regulator of the cell cycle that participates in the maintenance of genome integrity. This is Zinc finger protein 830 from Xenopus laevis (African clawed frog).